A 187-amino-acid polypeptide reads, in one-letter code: Large ribosomal subunit protein uL5 (187 aa).

It belongs to the universal ribosomal protein uL5 family. As to quaternary structure, part of the 50S ribosomal subunit; part of the 5S rRNA/L5/L18/L25 subcomplex. Contacts the 5S rRNA and the P site tRNA. Forms a bridge to the 30S subunit in the 70S ribosome.

Functionally, this is one of the proteins that bind and probably mediate the attachment of the 5S RNA into the large ribosomal subunit, where it forms part of the central protuberance. In the 70S ribosome it contacts protein S13 of the 30S subunit (bridge B1b), connecting the 2 subunits; this bridge is implicated in subunit movement. Contacts the P site tRNA; the 5S rRNA and some of its associated proteins might help stabilize positioning of ribosome-bound tRNAs. This is Large ribosomal subunit protein uL5 from Corynebacterium diphtheriae (strain ATCC 700971 / NCTC 13129 / Biotype gravis).